Here is a 367-residue protein sequence, read N- to C-terminus: Glutamate 5-kinase (367 aa).

Position 10 (Lys-10) interacts with ATP. Substrate-binding residues include Ser-50, Asp-137, and Asn-149. ATP contacts are provided by residues 169-170 and 211-217; these read TD and TGGMSTK. In terms of domain architecture, PUA spans 275 to 353; sequence AGIITIDAGA…QDIEQVLGYE (79 aa).

It belongs to the glutamate 5-kinase family.

It localises to the cytoplasm. The enzyme catalyses L-glutamate + ATP = L-glutamyl 5-phosphate + ADP. It functions in the pathway amino-acid biosynthesis; L-proline biosynthesis; L-glutamate 5-semialdehyde from L-glutamate: step 1/2. Its function is as follows. Catalyzes the transfer of a phosphate group to glutamate to form L-glutamate 5-phosphate. In Pasteurella multocida (strain Pm70), this protein is Glutamate 5-kinase.